Here is a 362-residue protein sequence, read N- to C-terminus: 3-dehydroquinate synthase (362 aa).

NAD(+) contacts are provided by residues 72 to 77 (SGEQAK), 106 to 110 (GVVGD), 130 to 131 (TT), lysine 142, and lysine 151. Glutamate 184, histidine 246, and histidine 263 together coordinate Zn(2+).

Belongs to the sugar phosphate cyclases superfamily. Dehydroquinate synthase family. NAD(+) serves as cofactor. The cofactor is Co(2+). It depends on Zn(2+) as a cofactor.

It is found in the cytoplasm. The catalysed reaction is 7-phospho-2-dehydro-3-deoxy-D-arabino-heptonate = 3-dehydroquinate + phosphate. It participates in metabolic intermediate biosynthesis; chorismate biosynthesis; chorismate from D-erythrose 4-phosphate and phosphoenolpyruvate: step 2/7. Functionally, catalyzes the conversion of 3-deoxy-D-arabino-heptulosonate 7-phosphate (DAHP) to dehydroquinate (DHQ). This chain is 3-dehydroquinate synthase, found in Bacillus subtilis (strain 168).